We begin with the raw amino-acid sequence, 431 residues long: Glutamate--tRNA ligase 1 (431 aa).

The 'HIGH' region signature appears at 6 to 16 (PSPTGDMHIGN). A 'KMSKS' region motif is present at residues 235–239 (KMSKR). K238 is a binding site for ATP.

It belongs to the class-I aminoacyl-tRNA synthetase family. Glutamate--tRNA ligase type 1 subfamily. In terms of assembly, monomer.

Its subcellular location is the cytoplasm. It carries out the reaction tRNA(Glu) + L-glutamate + ATP = L-glutamyl-tRNA(Glu) + AMP + diphosphate. Its function is as follows. Catalyzes the attachment of glutamate to tRNA(Glu) in a two-step reaction: glutamate is first activated by ATP to form Glu-AMP and then transferred to the acceptor end of tRNA(Glu). The polypeptide is Glutamate--tRNA ligase 1 (Campylobacter jejuni subsp. jejuni serotype O:23/36 (strain 81-176)).